A 270-amino-acid chain; its full sequence is MMNRIHAVILDWAGTTVDFGSFAPTQIFVEAFRQAFDVEITLAEARVPMGLGKWQHIEALGKLPAVDARWQAKFGRSMSAADIDAIYAAFMPLQIAKVVDFSSPIAGVIDTIAALRAEGIKIGSCSGYPRAVMERLVPAAAEHGYRPDHWVATDDLAAGGRPGPWMALQNVIALGIDAVAHCVKVDDAAPGISEGLNAGMWTVGLAVSGNEFGATWDAYQTMSKEDVAVRREHAASKLYAAGAHYVVDSLADLSGVIAHINARLAQGERP.

The active-site Nucleophile is the Asp-11. Asp-11 and Ala-13 together coordinate Mg(2+). Residue Lys-53 is the Schiff-base intermediate with substrate of the active site. Residue Asp-187 coordinates Mg(2+).

The protein belongs to the HAD-like hydrolase superfamily. PhnX family. As to quaternary structure, homodimer. Mg(2+) is required as a cofactor.

The catalysed reaction is phosphonoacetaldehyde + H2O = acetaldehyde + phosphate + H(+). Functionally, involved in phosphonate degradation. This Salmonella enteritidis PT4 (strain P125109) protein is Phosphonoacetaldehyde hydrolase.